Consider the following 154-residue polypeptide: MINEIQIAAFNAAYAKTIDSDAMEQWPTFFTKDCHYCVTNVDNHDEGLAAGIVWADSQDMLTDRISALREANIYERHRYRHILGLPSIQSGDATQASASTPFMVLRIMHTGETEVFASGEYLDKFTTIDGKLRLQERIAVCDSTVTDTLMALPL.

The protein belongs to the bacterial ring-hydroxylating dioxygenase beta subunit family. Heterotetramer composed of 2 alpha (TphA2I and TphA2II) and 2 beta (TphA3I and TphA3II) subunits. Part of a multicomponent enzyme system composed of a reductase (TphA1I or TphA1II) and a two-subunit oxygenase component (TphA2I or TphA2II and TphA3I or TphA3II). Fe cation serves as cofactor.

The enzyme catalyses terephthalate + NADH + O2 + H(+) = (3S,4R)-3,4-dihydroxycyclohexa-1,5-diene-1,4-dicarboxylate + NAD(+). With respect to regulation, inhibited by EDTA. Functionally, component of the terephthalate 1,2-dioxygenase multicomponent enzyme system which catalyzes the dioxygenation of terephthalate (TER/TPA) to 1,2-dihydroxy-3,5-cyclohexadiene-1,4-dicarboxylic acid (DCD). It can also use 2,5-dicarboxypyridine (PDC) and 1,4-napthalenedicarboxylic acid (NDC) as substrates, and preferentially uses NADPH which is the physiological electron donor. In Comamonas sp, this protein is Terephthalate 1,2-dioxygenase, terminal oxygenase component subunit beta 2 (tphA3II).